Consider the following 516-residue polypeptide: Squalene epoxidase 4 (516 aa).

2 consecutive transmembrane segments (helical) span residues 2–22 (TYAWLWTLLAFVLTWMVFHLI) and 43–63 (ATDVIIVGAGVAGASLAYALA). Residues 53–54 (VA), 73–74 (ER), R81, R153, V169, D335, and M348 each bind FAD. The chain crosses the membrane as a helical span at residues 435–455 (ILGGMNPHPLTLVLHLVAITL).

It belongs to the squalene monooxygenase family. FAD is required as a cofactor. In terms of tissue distribution, expressed mainly in seedlings and inflorescences.

The protein resides in the membrane. It catalyses the reaction squalene + reduced [NADPH--hemoprotein reductase] + O2 = (S)-2,3-epoxysqualene + oxidized [NADPH--hemoprotein reductase] + H2O + H(+). It participates in terpene metabolism; lanosterol biosynthesis; lanosterol from farnesyl diphosphate: step 2/3. In terms of biological role, catalyzes the stereospecific oxidation of squalene to (S)-2,3-epoxysqualene, and is considered to be a rate-limiting enzyme in steroid biosynthesis. This chain is Squalene epoxidase 4 (SQE4), found in Arabidopsis thaliana (Mouse-ear cress).